We begin with the raw amino-acid sequence, 595 residues long: Coagulation factor XII (595 aa).

An N-terminal signal peptide occupies residues 1-19 (MTALLFLGSLLMSLDLTLS). Residues 41 to 89 (VDGKLCHFPFQYHRRLYHKCIHKGQPGSRPWCATTPNFDEDQQWGYCLE) enclose the Fibronectin type-II domain. Cystine bridges form between Cys46/Cys72, Cys60/Cys87, Cys97/Cys109, Cys103/Cys118, Cys120/Cys129, Cys134/Cys162, Cys160/Cys169, Cys177/Cys188, Cys182/Cys197, Cys199/Cys208, Cys216/Cys294, Cys237/Cys276, and Cys265/Cys289. The 38-residue stretch at 93-130 (VKDHCSKHSPCHKGGTCVNTPNGPHCLCPEHLTGKHCQ) folds into the EGF-like 1 domain. An O-linked (Fuc) threonine glycan is attached at Thr108. In terms of domain architecture, Fibronectin type-I spans 132–172 (EKCFESQLLKFFHENEIWFRTGPGGVARCQCKGPQAVCKLL). An EGF-like 2 domain is found at 173–209 (TSQVCRVNPCLNGGTCLLVEDHRLCHCPAGYAGPFCD). The 80-residue stretch at 215–294 (TCYEDRGLSY…SWDYCDLEQC (80 aa)) folds into the Kringle domain. Asn248 is a glycosylation site (N-linked (GlcNAc...) asparagine). A glycan (O-linked (GalNAc...) threonine) is linked at Thr298. Positions 302-332 (PVSPESHDMLKPRPPILQSSPRDSTRNQNVV) are disordered. A glycan (O-linked (GalNAc...) serine) is linked at Ser307. Over residues 318-332 (LQSSPRDSTRNQNVV) the composition is skewed to polar residues. The O-linked (GalNAc...) threonine glycan is linked to Thr326. 7 disulfide bridges follow: Cys340–Cys466, Cys378–Cys394, Cys386–Cys455, Cys417–Cys420, Cys480–Cys549, Cys512–Cys528, and Cys539–Cys570. The Peptidase S1 domain occupies 354–594 (VVGGLVALPG…YLDWIQEHTA (241 aa)). His393 (charge relay system) is an active-site residue. Asn414 carries an N-linked (GlcNAc...) asparagine glycan. Asp442 serves as the catalytic Charge relay system. The Charge relay system role is filled by Ser543.

It belongs to the peptidase S1 family. In terms of assembly, interacts with HRG; the interaction, which is enhanced in the presence of zinc ions and inhibited by heparin-binding, inhibits factor XII autoactivation and contact-initiated coagulation. Post-translationally, O- and N-glycosylated.

It localises to the secreted. The enzyme catalyses Selective cleavage of Arg-|-Ile bonds in factor VII to form factor VIIa and factor XI to form factor XIa.. With respect to regulation, activity is promoted in the presence of negatively charged surfaces. Functionally, factor XII is a serum glycoprotein that participates in the initiation of blood coagulation, fibrinolysis, and the generation of bradykinin and angiotensin. Prekallikrein is cleaved by factor XII to form kallikrein, which then cleaves factor XII first to alpha-factor XIIa and then trypsin cleaves it to beta-factor XIIa. Alpha-factor XIIa activates factor XI to factor XIa. The sequence is that of Coagulation factor XII (F12) from Rattus norvegicus (Rat).